Consider the following 290-residue polypeptide: 33 kDa chaperonin (290 aa).

2 cysteine pairs are disulfide-bonded: cysteine 235–cysteine 237 and cysteine 268–cysteine 271.

It belongs to the HSP33 family. In terms of processing, under oxidizing conditions two disulfide bonds are formed involving the reactive cysteines. Under reducing conditions zinc is bound to the reactive cysteines and the protein is inactive.

It localises to the cytoplasm. Its function is as follows. Redox regulated molecular chaperone. Protects both thermally unfolding and oxidatively damaged proteins from irreversible aggregation. Plays an important role in the bacterial defense system toward oxidative stress. The protein is 33 kDa chaperonin of Streptococcus pyogenes serotype M49.